A 624-amino-acid polypeptide reads, in one-letter code: Kelch-like protein diablo (624 aa).

Over residues 1-21 (MGDPLLPGSTGLGSGPAAAAT) the composition is skewed to low complexity. Positions 1–55 (MGDPLLPGSTGLGSGPAAAATGGSGTTGTGLGSGGTSGAERPPSPARLTHTSEKH) are disordered. Residues 22 to 37 (GGSGTTGTGLGSGGTS) show a composition bias toward gly residues. The 68-residue stretch at 73–140 (CDVVLNVGGR…CYTAHIIVEE (68 aa)) folds into the BTB domain. The 103-residue stretch at 175-277 (CLGIRAFADT…SPKFLVGTVG (103 aa)) folds into the BACK domain. 6 Kelch repeats span residues 324 to 370 (VLFA…VLND), 372 to 418 (LYAV…VLDG), 419 to 465 (FLYA…VLSG), 467 to 512 (LYAI…VFNN), 514 to 559 (IYAV…VVNG), and 560 to 606 (QLYA…VMRA).

Its pathway is protein modification; protein ubiquitination. Its function is as follows. Probable substrate-specific adapter of an E3 ubiquitin-protein ligase complex which mediates the ubiquitination and subsequent proteasomal degradation of target proteins. May have a role in synapse differentiation and growth. This is Kelch-like protein diablo from Drosophila virilis (Fruit fly).